The chain runs to 209 residues: NAD(P)H-quinone oxidoreductase subunit N, chloroplastic (209 aa).

The N-terminal 45 residues, 1–45 (MGSRAICIQRVAPPCFEASQVKKIKTVGSFLVNTRSKRRRSTGVK), are a transit peptide targeting the chloroplast.

This sequence belongs to the NDH complex subunit N family. Part of the chloroplast NDH complex, composed of a mixture of chloroplast and nucleus encoded subunits. Component of the NDH subcomplex A, at least composed of ndhH, ndhI, ndhJ, ndhK, ndhL, ndhM, ndhN and ndhO.

Its subcellular location is the plastid. The protein localises to the chloroplast thylakoid membrane. The enzyme catalyses a plastoquinone + NADH + (n+1) H(+)(in) = a plastoquinol + NAD(+) + n H(+)(out). It catalyses the reaction a plastoquinone + NADPH + (n+1) H(+)(in) = a plastoquinol + NADP(+) + n H(+)(out). Functionally, NDH shuttles electrons from NAD(P)H:plastoquinone, via FMN and iron-sulfur (Fe-S) centers, to quinones in the photosynthetic chain and possibly in a chloroplast respiratory chain. The immediate electron acceptor for the enzyme in this species is believed to be plastoquinone. Couples the redox reaction to proton translocation, and thus conserves the redox energy in a proton gradient. This chain is NAD(P)H-quinone oxidoreductase subunit N, chloroplastic, found in Arabidopsis thaliana (Mouse-ear cress).